Here is a 155-residue protein sequence, read N- to C-terminus: MSRRGAAEEKTAKSDPIYRNRLVNMLVNRILKHGKKSLAYQIIYRAVKKIQQKTETNPLSVLRQAIRGVTPDITVKARRVGGSTHQVPIEIGSTQGKALAIRWLLAASRKRPGRNMAFKLSSELVDAAKGSGDAIRKKEETHRMAEANRAFAHFR.

Belongs to the universal ribosomal protein uS7 family. In terms of assembly, part of the 30S ribosomal subunit.

It localises to the plastid. Its subcellular location is the chloroplast. Functionally, one of the primary rRNA binding proteins, it binds directly to 16S rRNA where it nucleates assembly of the head domain of the 30S subunit. The polypeptide is Small ribosomal subunit protein uS7cz/uS7cy (rps7-A) (Coffea arabica (Arabian coffee)).